A 512-amino-acid chain; its full sequence is UDP-N-acetylmuramate--L-alanine ligase (512 aa).

132-138 (GAHGKTT) is an ATP binding site.

The protein belongs to the MurCDEF family.

It is found in the cytoplasm. It catalyses the reaction UDP-N-acetyl-alpha-D-muramate + L-alanine + ATP = UDP-N-acetyl-alpha-D-muramoyl-L-alanine + ADP + phosphate + H(+). It participates in cell wall biogenesis; peptidoglycan biosynthesis. In terms of biological role, cell wall formation. This is UDP-N-acetylmuramate--L-alanine ligase from Bifidobacterium longum subsp. infantis (strain ATCC 15697 / DSM 20088 / JCM 1222 / NCTC 11817 / S12).